The chain runs to 2039 residues: PHD finger protein 3 (2039 aa).

Residues Ser-97 and Ser-125 each carry the phosphoserine modification. The segment covering 144–168 (STIAKRSNAAPLSNTKKASGKTVST) has biased composition (polar residues). Residues 144–178 (STIAKRSNAAPLSNTKKASGKTVSTAKAGVKQPER) are disordered. 2 positions are modified to phosphoserine: Ser-283 and Ser-299. Positions 460–472 (ESHETANLQDDRN) are enriched in basic and acidic residues. Disordered regions lie at residues 460–492 (ESHE…KHTK), 528–555 (VKRN…IDKE), and 596–685 (LSDK…SLDE). The span at 473-483 (SQSSSVSYLES) shows a compositional bias: low complexity. Positions 596–612 (LSDKSHAHPGCLKEPHH) are enriched in basic and acidic residues. Polar residues predominate over residues 617–640 (GHVSHSSQKQCHKPQQQAPAMKTN). Residues 642–670 (HVKEELEHPGVEHFKEEDKLKLKKPEKNL) show a composition bias toward basic and acidic residues. Residue Lys-644 forms a Glycyl lysine isopeptide (Lys-Gly) (interchain with G-Cter in SUMO2) linkage. Position 680 is a phosphoserine (Ser-680). The PHD-type zinc-finger motif lies at 717 to 772 (SKQCGFCKKPHGNRFMVGCGRCDDWFHGDCVGLSLSQAQQMGEEDKEYVCVKCCAE). Positions 860–904 (GQPVLPRRSSEEKSEKIPKESTTVTCTGEKASKPGTHEKQEMKKK) are disordered. 2 stretches are compositionally biased toward basic and acidic residues: residues 867 to 878 (RSSEEKSEKIPK) and 889 to 900 (KASKPGTHEKQE). One can recognise a TFIIS central domain in the interval 927 to 1046 (IRQSVRHSLK…MIEKEQREVE (120 aa)). Residue Lys-964 forms a Glycyl lysine isopeptide (Lys-Gly) (interchain with G-Cter in SUMO2) linkage. Ser-1014 bears the Phosphoserine mark. The interval 1078–1109 (EPAANKSLEKPEGSEKQKEEVDSMSKDTTSQH) is disordered. The segment covering 1084–1102 (SLEKPEGSEKQKEEVDSMS) has biased composition (basic and acidic residues). Phosphoserine is present on residues Ser-1133, Ser-1148, and Ser-1178. 3 disordered regions span residues 1171 to 1191 (FEEE…RPEM), 1360 to 1380 (STSH…PPDK), and 1581 to 1623 (KQEE…VGKG). Over residues 1581-1598 (KQEETVESKEKTLKRQLQ) the composition is skewed to basic and acidic residues. A phosphoserine mark is found at Ser-1614 and Ser-1642. 2 disordered regions span residues 1643-1684 (PQFI…LPGL) and 1776-1800 (PSKS…PMRP). A compositionally biased stretch (basic and acidic residues) spans 1666–1684 (ESKDGDSCRNGEKHMLPGL). The segment covering 1781 to 1797 (TFTSRSTSPRTSTNFSP) has biased composition (low complexity). Asymmetric dimethylarginine is present on residues Arg-1867 and Arg-1877. Residues 1884–2039 (FYQVKDIRRP…DHTDRTKSKR (156 aa)) are disordered. Basic and acidic residues-rich tracts occupy residues 1888-1902 (KDIR…DPWG) and 1912-2039 (PFNR…KSKR). Phosphoserine occurs at positions 1898 and 1925. Residue Lys-1931 forms a Glycyl lysine isopeptide (Lys-Gly) (interchain with G-Cter in SUMO2) linkage.

In terms of tissue distribution, ubiquitous. Expression is significantly reduced or lost in glioblastomas, glioblastoma cell lines, anaplastic astrocytomas, and astrocytomas.

This is PHD finger protein 3 (PHF3) from Homo sapiens (Human).